A 674-amino-acid polypeptide reads, in one-letter code: F420-dependent formate dehydrogenase 1 subunit alpha (674 aa).

Positions 3–59 constitute a 4Fe-4S Mo/W bis-MGD-type domain; it reads LDFIHTICPYCGTGCGVDLVVKDGTLVGTNPFKRHPVNEGKTCIKGSYCHEFVHRDD. Cysteine 10, cysteine 13, cysteine 17, and cysteine 45 together coordinate [4Fe-4S] cluster. Selenocysteine 132 is a non-standard amino acid (selenocysteine).

It belongs to the prokaryotic molybdopterin-containing oxidoreductase family. In terms of assembly, dimer of an alpha (FdhA1) and a beta (FdhB1) subunit. Requires [4Fe-4S] cluster as cofactor. It depends on Mo-bis(molybdopterin guanine dinucleotide) as a cofactor. The cofactor is Zn(2+).

It catalyses the reaction oxidized coenzyme F420-(gamma-L-Glu)(n) + formate + 2 H(+) = reduced coenzyme F420-(gamma-L-Glu)(n) + CO2. Catalyzes the oxidation of formate to carbon dioxide, with coenzyme F420 as the electron acceptor. In vitro can also use methyl viologen as electron acceptor. This chain is F420-dependent formate dehydrogenase 1 subunit alpha, found in Methanococcus maripaludis (strain DSM 14266 / JCM 13030 / NBRC 101832 / S2 / LL).